Consider the following 851-residue polypeptide: mRNA-capping enzyme catalytic subunit (851 aa).

Residues 1 to 544 (MDKYISKTPL…EEEKLADIAA (544 aa)) are triphosphatase-guanylyltransferase. Residues E38, E40, E199, and E201 each contribute to the Mg(2+) site. K266 functions as the N6-GMP-lysine intermediate in the catalytic mechanism. 554–555 (LN) lines the S-adenosyl-L-methionine pocket. Residues 565–850 (RVRGALGILS…HYMVYVFSKE (286 aa)) form the mRNA cap 0 methyltransferase domain. 574-575 (SN) provides a ligand contact to mRNA. Residues K578, D603, D625, and 683–685 (QFA) contribute to the S-adenosyl-L-methionine site.

The protein in the N-terminal section; belongs to the dsDNA virus mRNA guanylyltransferase family. This sequence in the C-terminal section; belongs to the class I-like SAM-binding methyltransferase superfamily. mRNA cap 0 methyltransferase family. In terms of assembly, heterodimer of a catalytic and a regulatory subunit. Intrinsic methyltransferase activity of the catalytic subunit is weak and needs to be stimulated 30- to 50-fold by the regulatory subunit, which is itself catalytically inert. Mg(2+) serves as cofactor.

It localises to the virion. The catalysed reaction is a 5'-end triphospho-ribonucleoside in mRNA + H2O = a 5'-end diphospho-ribonucleoside in mRNA + phosphate + H(+). It catalyses the reaction a 5'-end diphospho-ribonucleoside in mRNA + GTP + H(+) = a 5'-end (5'-triphosphoguanosine)-ribonucleoside in mRNA + diphosphate. The enzyme catalyses a 5'-end (5'-triphosphoguanosine)-ribonucleoside in mRNA + S-adenosyl-L-methionine = a 5'-end (N(7)-methyl 5'-triphosphoguanosine)-ribonucleoside in mRNA + S-adenosyl-L-homocysteine. Functionally, catalytic subunit of the mRNA capping enzyme which catalyzes three enzymatic reactions: the 5' triphosphate end of the pre-mRNA is hydrolyzed to a diphosphate by RNA 5' triphosphatase; the diphosphate RNA end is capped with GMP by RNA guanylyltransferase and the GpppN cap is methylated by RNA (guanine-N7) methyltransferase. Heterodimeric mRNA capping enzyme catalyzes the linkage of a N7-methyl-guanosine moiety to the first transcribed nucleotide (cap 0 structure), whereas the polymerase associated VP39 is responsible for a second methylation at the 2'-O position of the ribose (cap 1 structure). In terms of biological role, the heterodimeric enzyme is also involved in early viral gene transcription termination and intermediate viral gene transcription initiation. Early gene transcription termination requires the termination factor VTF, the DNA-dependent ATPase NPH-I and the Rap94 subunit of the viral RNA polymerase, as well as the presence of a specific termination motif. Binds, together with RAP94, to the termination motif 5'-UUUUUNU-3' in the nascent early mRNA. The protein is mRNA-capping enzyme catalytic subunit of Fowlpox virus (strain NVSL) (FPV).